The chain runs to 137 residues: Large ribosomal subunit protein uL16 (137 aa).

This sequence belongs to the universal ribosomal protein uL16 family. In terms of assembly, part of the 50S ribosomal subunit.

Its function is as follows. Binds 23S rRNA and is also seen to make contacts with the A and possibly P site tRNAs. In Rhodopseudomonas palustris (strain BisA53), this protein is Large ribosomal subunit protein uL16.